The following is a 437-amino-acid chain: Enolase (437 aa).

Residue Q162 participates in (2R)-2-phosphoglycerate binding. Catalysis depends on E204, which acts as the Proton donor. D251, E297, and D324 together coordinate Mg(2+). (2R)-2-phosphoglycerate contacts are provided by K349, R378, S379, and K400. The active-site Proton acceptor is K349.

Belongs to the enolase family. Mg(2+) is required as a cofactor.

It localises to the cytoplasm. Its subcellular location is the secreted. It is found in the cell surface. It catalyses the reaction (2R)-2-phosphoglycerate = phosphoenolpyruvate + H2O. The protein operates within carbohydrate degradation; glycolysis; pyruvate from D-glyceraldehyde 3-phosphate: step 4/5. Functionally, catalyzes the reversible conversion of 2-phosphoglycerate (2-PG) into phosphoenolpyruvate (PEP). It is essential for the degradation of carbohydrates via glycolysis. The chain is Enolase from Chlorobium chlorochromatii (strain CaD3).